The chain runs to 218 residues: Phosphatidylserine decarboxylase proenzyme (218 aa).

The active-site Schiff-base intermediate with substrate; via pyruvic acid is serine 188. Position 188 is a pyruvic acid (Ser); by autocatalysis (serine 188).

Belongs to the phosphatidylserine decarboxylase family. PSD-A subfamily. As to quaternary structure, heterodimer of a large membrane-associated beta subunit and a small pyruvoyl-containing alpha subunit. Requires pyruvate as cofactor. Is synthesized initially as an inactive proenzyme. Formation of the active enzyme involves a self-maturation process in which the active site pyruvoyl group is generated from an internal serine residue via an autocatalytic post-translational modification. Two non-identical subunits are generated from the proenzyme in this reaction, and the pyruvate is formed at the N-terminus of the alpha chain, which is derived from the carboxyl end of the proenzyme. The post-translation cleavage follows an unusual pathway, termed non-hydrolytic serinolysis, in which the side chain hydroxyl group of the serine supplies its oxygen atom to form the C-terminus of the beta chain, while the remainder of the serine residue undergoes an oxidative deamination to produce ammonia and the pyruvoyl prosthetic group on the alpha chain.

The protein localises to the cell membrane. It catalyses the reaction a 1,2-diacyl-sn-glycero-3-phospho-L-serine + H(+) = a 1,2-diacyl-sn-glycero-3-phosphoethanolamine + CO2. It functions in the pathway phospholipid metabolism; phosphatidylethanolamine biosynthesis; phosphatidylethanolamine from CDP-diacylglycerol: step 2/2. Catalyzes the formation of phosphatidylethanolamine (PtdEtn) from phosphatidylserine (PtdSer). The chain is Phosphatidylserine decarboxylase proenzyme from Streptomyces coelicolor (strain ATCC BAA-471 / A3(2) / M145).